The primary structure comprises 72 residues: Small ribosomal subunit protein bS20 (72 aa).

It belongs to the bacterial ribosomal protein bS20 family.

In terms of biological role, binds directly to 16S ribosomal RNA. The protein is Small ribosomal subunit protein bS20 (rpsT) of Proteus mirabilis.